The following is a 774-amino-acid chain: Lysyl oxidase homolog 2 (774 aa).

Positions 1–24 (MEGFLGFNHNHCFIVLFFVSLSLA) are cleaved as a signal peptide. 4 SRCR domains span residues 57 to 158 (LRLA…VVCS), 187 to 301 (IRPI…ASCV), 325 to 424 (VRLK…VRCN), and 434 to 543 (LRLV…VSCS). 9 cysteine pairs are disulfide-bonded: cysteine 83–cysteine 147, cysteine 96–cysteine 157, cysteine 127–cysteine 137, cysteine 217–cysteine 290, cysteine 230–cysteine 300, cysteine 264–cysteine 274, cysteine 350–cysteine 413, cysteine 363–cysteine 423, and cysteine 394–cysteine 404. An N-linked (GlcNAc...) asparagine glycan is attached at asparagine 287. Asparagine 454 carries N-linked (GlcNAc...) asparagine glycosylation. Cystine bridges form between cysteine 463-cysteine 529, cysteine 476-cysteine 542, and cysteine 510-cysteine 520. A lysyl-oxidase like region spans residues 547–751 (PDLVLNAELV…MYNSVHNGAN (205 aa)). 2 residues coordinate Ca(2+): aspartate 548 and leucine 549. Cystine bridges form between cysteine 572–cysteine 624, cysteine 578–cysteine 694, cysteine 656–cysteine 672, and cysteine 662–cysteine 684. The Cu cation site is built by histidine 625, histidine 627, and histidine 629. An N-linked (GlcNAc...) asparagine glycan is attached at asparagine 643. The lysine tyrosylquinone (Lys-Tyr) cross-link spans 652 to 688 (KASFCLEDTECEADVQKQYECANFGEQGITVGCWDVY). Tyrosine 688 bears the 2',4',5'-topaquinone mark. The Ca(2+) site is built by glutamate 721, aspartate 723, asparagine 726, and asparagine 727.

Belongs to the lysyl oxidase family. The cofactor is Cu cation. Lysine tyrosylquinone residue is required as a cofactor. In terms of processing, the lysine tyrosylquinone cross-link (LTQ) is generated by condensation of the epsilon-amino group of a lysine with a topaquinone produced by oxidation of tyrosine.

It is found in the secreted. The protein localises to the extracellular space. It localises to the extracellular matrix. The protein resides in the basement membrane. Its subcellular location is the nucleus. It is found in the chromosome. The protein localises to the endoplasmic reticulum. The catalysed reaction is L-lysyl-[protein] + O2 + H2O = (S)-2-amino-6-oxohexanoyl-[protein] + H2O2 + NH4(+). In terms of biological role, mediates the post-translational oxidative deamination of lysine residues on target proteins leading to the formation of deaminated lysine (allysine). Acts as a transcription corepressor and specifically mediates deamination of trimethylated 'Lys-4' of histone H3 (H3K4me3), a specific tag for epigenetic transcriptional activation. Shows no activity against histone H3 when it is trimethylated on 'Lys-9' (H3K9me3) or 'Lys-27' (H3K27me3) or when 'Lys-4' is monomethylated (H3K4me1) or dimethylated (H3K4me2). Also mediates deamination of methylated TAF10, a member of the transcription factor IID (TFIID) complex, which induces release of TAF10 from promoters, leading to inhibition of TFIID-dependent transcription. LOXL2-mediated deamination of TAF10 results in transcriptional repression of genes required for embryonic stem cell pluripotency including POU5F1/OCT4, NANOG, KLF4 and SOX2. Involved in epithelial to mesenchymal transition (EMT) via interaction with SNAI1 and participates in repression of E-cadherin CDH1, probably by mediating deamination of histone H3. During EMT, involved with SNAI1 in negatively regulating pericentromeric heterochromatin transcription. SNAI1 recruits LOXL2 to pericentromeric regions to oxidize histone H3 and repress transcription which leads to release of heterochromatin component CBX5/HP1A, enabling chromatin reorganization and acquisition of mesenchymal traits. Interacts with the endoplasmic reticulum protein HSPA5 which activates the IRE1-XBP1 pathway of the unfolded protein response, leading to expression of several transcription factors involved in EMT and subsequent EMT induction. When secreted into the extracellular matrix, promotes cross-linking of extracellular matrix proteins by mediating oxidative deamination of peptidyl lysine residues in precursors to fibrous collagen and elastin. Acts as a regulator of sprouting angiogenesis, probably via collagen IV scaffolding. Acts as a regulator of chondrocyte differentiation, probably by regulating expression of factors that control chondrocyte differentiation. The polypeptide is Lysyl oxidase homolog 2 (LOXL2) (Gallus gallus (Chicken)).